Here is a 600-residue protein sequence, read N- to C-terminus: MPEIKVTPLGAGQDVGRSCILVSIAGKNVMLDCGMHMGYNDDRRFPDFSYITQNGRLTDFLDCVIISHFHLDHCGALPYFSEMVGYDGPIYMTHPTKAICPILLEDYRKITVDKKGETNFFTSQMIKDCMKKVVAVHLHQTVQVDEELEIKAYYAGHVLGAAMFQIKVGCESVVYTGDYNMTPDRHLGAAWIDKCRPDLLITESTYATTIRDSKRCRERDFLKKVHETVERGGKVLIPVFALGRAQELCILLETFWERMNLKAPIYFSTGLTEKANHYYKLFITWTNQKIRKTFVQRNMFEFKHIKAFDRAFADNPGPMVVFATPGMLHAGQSLQIFRKWAGNEKNMVIMPGYCVQGTVGHKILSGQRKLEMEGRQILEVKMQVEYMSFSAHADAKGIMQLIRQAEPRNVLLVHGEAKKMEFLKQKIEQEFHVNCYMPANGETTTIFTNPSIPVDISLGLLKRETAIGLLPDAKKPKLMHGTLIMKDNSFRLVSPEQALKELGLAEHQLRFTCRVHIQDPRKEHETVLRVYNHLKGVLKDYSVQHLPDGSITVESILIQATAHSEDQGTKVLLVSWTYQDEELGSYLTSLLKKGLPQSTS.

Histidine 68, histidine 70, aspartate 72, histidine 73, histidine 157, and aspartate 178 together coordinate Zn(2+). The HXHXDH motif signature appears at 68–73 (HFHLDH). Residue glutamate 203 is part of the active site. Histidine 414 is a Zn(2+) binding site. Residues 469 to 479 (LLPDAKKPKLM) carry the Nuclear localization signal motif.

The protein belongs to the metallo-beta-lactamase superfamily. RNA-metabolizing metallo-beta-lactamase-like family. INTS11 subfamily. In terms of assembly, component of the Integrator complex, composed of core subunits INTS1, INTS2, INTS3, INTS4, INTS5, INTS6, INTS7, INTS8, INTS9/RC74, INTS10, INTS11/CPSF3L, INTS12, INTS13, INTS14 and INTS15. The core complex associates with protein phosphatase 2A subunits PPP2CA and PPP2R1A, to form the Integrator-PP2A (INTAC) complex. INTS11 is part of the RNA endonuclease subcomplex, composed of INTS4, INTS9, INTS11 and inositol hexakisphosphate (InsP6). Zn(2+) serves as cofactor.

It is found in the nucleus. Its subcellular location is the cytoplasm. In terms of biological role, RNA endonuclease component of the integrator complex, a multiprotein complex that terminates RNA polymerase II (Pol II) transcription in the promoter-proximal region of genes. The integrator complex provides a quality checkpoint during transcription elongation by driving premature transcription termination of transcripts that are unfavorably configured for transcriptional elongation: the complex terminates transcription by (1) catalyzing dephosphorylation of the C-terminal domain (CTD) of Pol II subunit POLR2A/RPB1 and SUPT5H/SPT5, (2) degrading the exiting nascent RNA transcript via endonuclease activity and (3) promoting the release of Pol II from bound DNA. The integrator complex is also involved in terminating the synthesis of non-coding Pol II transcripts, such as enhancer RNAs (eRNAs), small nuclear RNAs (snRNAs), telomerase RNAs and long non-coding RNAs (lncRNAs). Within the integrator complex, INTS11 constitutes the RNA endonuclease subunit that degrades exiting nascent RNA transcripts. This is Integrator complex subunit 11 (INTS11) from Gallus gallus (Chicken).